The primary structure comprises 196 residues: Beta-crystallin A4 (196 aa).

Threonine 2 carries the N-acetylthreonine modification. The segment at 2 to 11 (TLQCTKSAGP) is N-terminal arm. 2 Beta/gamma crystallin 'Greek key' domains span residues 12-51 (WKMV…KVLS) and 52-98 (GAWV…RPAA). Residues 99–104 (CANHRD) form a connecting peptide region. Beta/gamma crystallin 'Greek key' domains follow at residues 105–146 (SRLT…HVHS) and 147–195 (GAWV…RRIQ).

Belongs to the beta/gamma-crystallin family. Homo/heterodimer, or complexes of higher-order. The structure of beta-crystallin oligomers seems to be stabilized through interactions between the N-terminal arms.

Functionally, crystallins are the dominant structural components of the vertebrate eye lens. This is Beta-crystallin A4 (CRYBA4) from Homo sapiens (Human).